Reading from the N-terminus, the 494-residue chain is Cytochrome P450 2A13 (494 aa).

Residue Asn297 participates in substrate binding. Residue Cys439 participates in heme binding.

Belongs to the cytochrome P450 family. Requires heme as cofactor. As to expression, expressed in liver and a number of extrahepatic tissues, including nasal mucosa, lung, trachea, brain, mammary gland, prostate, testis, and uterus, but not in heart, kidney, bone marrow, colon, small intestine, spleen, stomach, thymus, or skeletal muscle.

The protein localises to the endoplasmic reticulum membrane. Its subcellular location is the microsome membrane. It carries out the reaction an organic molecule + reduced [NADPH--hemoprotein reductase] + O2 = an alcohol + oxidized [NADPH--hemoprotein reductase] + H2O + H(+). In terms of biological role, exhibits a coumarin 7-hydroxylase activity. Active in the metabolic activation of hexamethylphosphoramide, N,N-dimethylaniline, 2'-methoxyacetophenone, N-nitrosomethylphenylamine, and the tobacco-specific carcinogen, 4-(methylnitrosamino)-1-(3-pyridyl)-1-butanone. Possesses phenacetin O-deethylation activity. This chain is Cytochrome P450 2A13 (CYP2A13), found in Homo sapiens (Human).